A 410-amino-acid chain; its full sequence is uncharacterized protein (410 aa).

The span at 178-187 (QKNHRNQLST) shows a compositional bias: polar residues. Disordered stretches follow at residues 178–203 (QKNH…QEHQ) and 236–272 (RAEQ…PTVQ). Residues 188–198 (QKKQQQALQKA) show a composition bias toward low complexity. Positions 236-263 (RAEQAAREQEKREREALAQRQKAEEKRT) are enriched in basic and acidic residues.

This is an uncharacterized protein from Haemophilus influenzae (strain ATCC 51907 / DSM 11121 / KW20 / Rd).